Consider the following 119-residue polypeptide: Ribonuclease P protein component (119 aa).

It belongs to the RnpA family. Consists of a catalytic RNA component (M1 or rnpB) and a protein subunit.

The catalysed reaction is Endonucleolytic cleavage of RNA, removing 5'-extranucleotides from tRNA precursor.. Its function is as follows. RNaseP catalyzes the removal of the 5'-leader sequence from pre-tRNA to produce the mature 5'-terminus. It can also cleave other RNA substrates such as 4.5S RNA. The protein component plays an auxiliary but essential role in vivo by binding to the 5'-leader sequence and broadening the substrate specificity of the ribozyme. The protein is Ribonuclease P protein component of Syntrophomonas wolfei subsp. wolfei (strain DSM 2245B / Goettingen).